The following is a 293-amino-acid chain: Protein boule-like (293 aa).

A compositionally biased stretch (polar residues) spans 1 to 16; it reads METESRAQSTNQTQTD. The tract at residues 1-39 is disordered; that stretch reads METESRAQSTNQTQTDSLSPSPNPVSPVPLNNPTSGPRY. Ser-19, Ser-21, and Ser-26 each carry phosphoserine. In terms of domain architecture, RRM spans 45-122; that stretch reads NRIFVGGIDF…KKLNIGPAIR (78 aa). Residues 172 to 196 form the DAZ domain; sequence PSRSISSSPVMVAQPVYQQPAYHYQ.

It belongs to the RRM DAZ family. In terms of assembly, interacts with DAZ1 and DAZL. Testis specific. Not expressed in early embryos, primoridal germ cells and spermatogonial cells. First expressed in the cytoplasm of spermatocytes and then persists through meiosis.

It localises to the cytoplasm. Functionally, probable RNA-binding protein, which may be required during spermatogenesis. May act by binding to the 3'-UTR of mRNAs and regulating their translation. The protein is Protein boule-like of Mus musculus (Mouse).